We begin with the raw amino-acid sequence, 3564 residues long: CUB and sushi domain-containing protein 1 (3564 aa).

The signal sequence occupies residues 1 to 26 (MTAWRRFQSLLLLLGLLVLCARLLTA). Over 27–3487 (AKGQNCGGLV…SHYHGTSSGS (3461 aa)) the chain is Extracellular. 10 disulfides stabilise this stretch: C32/C58, C145/C185, C171/C202, C208/C234, C349/C389, C375/C406, C411/C437, C527/C567, C553/C580, and C584/C610. Positions 32–140 (CGGLVQGPNG…QGFKALYEVL (109 aa)) constitute a CUB 1 domain. Residues N40 and N57 are each glycosylated (N-linked (GlcNAc...) asparagine). The Sushi 1 domain maps to 143–204 (HTCGNPGEIL…WDFPAPFCRA (62 aa)). The CUB 2 domain occupies 208–312 (CGGTLRGTSS…KGFNAQFQVK (105 aa)). The 62-residue stretch at 347–408 (DMCPDPGIPE…WSDHRPICRA (62 aa)) folds into the Sushi 2 domain. Residues 411–522 (CGSNLRGPSG…PGFKAVYQEI (112 aa)) form the CUB 3 domain. A Sushi 3 domain is found at 525 to 582 (GGCGDPGIPAYGKRTGSSFLHGDTLTFECPAAFELVGERVITCQQNNQWSGNKPSCVF). In terms of domain architecture, CUB 4 spans 584–692 (CFFNFTASSG…RGFNITYTTF (109 aa)). N-linked (GlcNAc...) asparagine glycosylation is found at N587 and N686. Positions 695–756 (NECHDPGIPI…WSSTVPRCEA (62 aa)) constitute a Sushi 4 domain. Intrachain disulfides connect C697–C738, C723–C754, C758–C784, C873–C913, C899–C926, and C930–C956. Positions 758 to 866 (CGGHLTASSG…IGFLIHYESV (109 aa)) constitute a CUB 5 domain. Residues 871–928 (DSCLDPGIPVNGHRHGGDFGIRSTVTFSCDPGYTLSDDEPLVCERNHQWNHALPSCDA) enclose the Sushi 5 domain. The 111-residue stretch at 930-1040 (CGGYIQGKSG…EGFNITFSEY (111 aa)) folds into the CUB 6 domain. Residues N955, N1015, and N1034 are each glycosylated (N-linked (GlcNAc...) asparagine). The Sushi 6 domain maps to 1043–1102 (EPCDDPGVPAFSRRIGFHFGVGDSLTFSCFLGYRLEGATKLTCLGGGRRVWSAPLPRCVA). Intrachain disulfides connect C1045/C1085, C1071/C1100, and C1104/C1130. Residues 1104-1212 (CGASVKGNEG…QGFQLTYTSF (109 aa)) enclose the CUB 7 domain. N-linked (GlcNAc...) asparagine glycans are attached at residues N1184 and N1197. Positions 1215–1275 (VKCEDPGIPN…WDKPLPSCIA (61 aa)) constitute a Sushi 7 domain. 12 cysteine pairs are disulfide-bonded: C1217-C1258, C1244-C1273, C1277-C1304, C1391-C1431, C1417-C1447, C1451-C1477, C1564-C1604, C1590-C1621, C1625-C1651, C1741-C1781, C1767-C1798, and C1802-C1828. The CUB 8 domain maps to 1277–1386 (CGGQIHAATS…SGFSIQFSTS (110 aa)). Residues 1389-1449 (ATCNDPGMPQ…WQPDPPTCIA (61 aa)) enclose the Sushi 8 domain. The N-linked (GlcNAc...) asparagine glycan is linked to N1399. The region spanning 1451-1559 (CGGNLTGPAG…SGFAIEFKEK (109 aa)) is the CUB 9 domain. N-linked (GlcNAc...) asparagine glycosylation is found at N1454 and N1572. Residues 1562–1623 (EACFDPGNIM…WDQVLPSCNA (62 aa)) form the Sushi 9 domain. One can recognise a CUB 10 domain in the interval 1625 to 1733 (CGGQYTGSEG…RGFHFVYQAV (109 aa)). An N-linked (GlcNAc...) asparagine glycan is attached at N1644. The Sushi 10 domain occupies 1739–1800 (TQCSSVPEPR…WNDTIPSCVV (62 aa)). N-linked (GlcNAc...) asparagine glycosylation is found at N1792, N1805, and N1882. In terms of domain architecture, CUB 11 spans 1802 to 1910 (CSGNFTQRRG…AGFHLEYKTV (109 aa)). The Sushi 11 domain maps to 1913–1972 (AACQEPALPSNSIKIGDRYMVNDVLSFQCEPGYTLQGRSHISCMPGTVRRWNYPSPLCIA). Cystine bridges form between C1915-C1955, C1941-C1970, and C1974-C2000. Residues 1974–2082 (CGGTLSTLGG…QGFKLAYQAY (109 aa)) enclose the CUB 12 domain. N2018 is a glycosylation site (N-linked (GlcNAc...) asparagine). Residues 2085–2144 (QNCPDPPPFQNGYMINSDYSVGQSVSFECYPGYILIGHPVLTCQHGINRNWNYPFPRCDA) form the Sushi 12 domain. 3 disulfides stabilise this stretch: C2087-C2127, C2113-C2142, and C2146-C2172. The region spanning 2146 to 2257 (CGYNVTSQNG…LNFHAFQLKK (112 aa)) is the CUB 13 domain. N-linked (GlcNAc...) asparagine glycosylation is found at N2149, N2154, and N2187. The region spanning 2256 to 2317 (KKCQPPPAVP…FEGSLPTCEA (62 aa)) is the Sushi 13 domain. 3 cysteine pairs are disulfide-bonded: C2258–C2300, C2286–C2315, and C2319–C2347. In terms of domain architecture, CUB 14 spans 2319-2430 (CPANEVRTGS…KGFKIRYAAP (112 aa)). N-linked (GlcNAc...) asparagine glycosylation is found at N2358, N2394, N2400, N2445, N2470, and N2503. 15 Sushi domains span residues 2430 to 2492 (PYCS…LCQA), 2493 to 2554 (VSCG…TCKP), 2555 to 2619 (VACP…SCRV), 2620 to 2677 (ISCG…RCLA), 2678 to 2735 (GHCG…VCVP), 2736 to 2793 (ITCG…TCRV), 2794 to 2856 (VNCS…KCLA), 2857 to 2914 (ISCG…HCTG), 2918 to 2975 (GFCG…VCEA), 2976 to 3034 (VSCG…DCTI), 3035 to 3094 (ISCG…VCKA), 3095 to 3152 (VLCP…QCLP), 3153 to 3210 (VFCG…TCID), 3214 to 3272 (NTCP…ECIP), and 3273 to 3332 (HACR…VCKS). 12 disulfides stabilise this stretch: C2432-C2473, C2459-C2490, C2495-C2537, C2521-C2552, C2557-C2602, C2588-C2617, C2622-C2662, C2648-C2675, C2680-C2720, C2706-C2733, C2738-C2778, and C2764-C2791. N-linked (GlcNAc...) asparagine glycosylation occurs at N2605. N-linked (GlcNAc...) asparagine glycosylation is found at N2750 and N2761. The N-linked (GlcNAc...) asparagine glycan is linked to N2795. 18 disulfides stabilise this stretch: C2796/C2841, C2827/C2854, C2859/C2899, C2885/C2912, C2920/C2960, C2946/C2973, C2978/C3019, C3005/C3032, C3037/C3079, C3063/C3092, C3097/C3137, C3123/C3150, C3155/C3195, C3181/C3208, C3216/C3257, C3243/C3270, C3275/C3317, and C3302/C3330. Residue N2894 is glycosylated (N-linked (GlcNAc...) asparagine). A glycan (N-linked (GlcNAc...) asparagine) is linked at N2963. 2 N-linked (GlcNAc...) asparagine glycosylation sites follow: N3022 and N3056. N3105 carries an N-linked (GlcNAc...) asparagine glycan. N3228 and N3260 each carry an N-linked (GlcNAc...) asparagine glycan. 3 N-linked (GlcNAc...) asparagine glycosylation sites follow: N3339, N3379, and N3386. A helical membrane pass occupies residues 3488 to 3508 (VAAAILVPFFALILSGFAFYL). Residues 3509–3564 (YKHRTRPKVQYNGYAGHENSNGQASFENPMYDTNLKPTEAKAVRFDTTLNTVCTVV) lie on the Cytoplasmic side of the membrane.

Belongs to the CSMD family. In terms of tissue distribution, weakly expressed in most tissues, except in brain. Expressed at intermediate level in brain, including cerebellum, substantia nigra, hippocampus and fetal brain.

The protein resides in the membrane. Potential suppressor of squamous cell carcinomas. The sequence is that of CUB and sushi domain-containing protein 1 (CSMD1) from Homo sapiens (Human).